The sequence spans 178 residues: Endothelin-2 (178 aa).

The first 24 residues, 1–24, serve as a signal peptide directing secretion; that stretch reads MVAVPTAWCSVALALLLALQEGKG. Positions 25 to 46 are excised as a propeptide; that stretch reads QVAAAPDHPAPSPRARGSHLRP. Intrachain disulfides connect Cys49-Cys63 and Cys51-Cys59. Positions 70 to 178 are excised as a propeptide; sequence VNTPGQTAPY…RPMYPRRRKT (109 aa). The endothelin-like stretch occupies residues 96-111; that stretch reads CECSSSGDPACATFCH. The disordered stretch occupies residues 158 to 178; the sequence is ARQHQEAEREPRPMYPRRRKT. Over residues 160–169 the composition is skewed to basic and acidic residues; that stretch reads QHQEAEREPR.

This sequence belongs to the endothelin/sarafotoxin family.

It localises to the secreted. Endothelins are endothelium-derived vasoconstrictor peptides. The polypeptide is Endothelin-2 (EDN2) (Mustela putorius furo (European domestic ferret)).